A 232-amino-acid chain; its full sequence is N-acetyltransferase 8B (232 aa).

Residues 1–62 lie on the Cytoplasmic side of the membrane; sequence MPRFEAQKSS…FLLLLGVPLA (62 aa). The helical; Signal-anchor for type II membrane protein transmembrane segment at 63-83 threads the bilayer; the sequence is LVLVSGSWILAVICIFFLLLL. The N-acetyltransferase domain occupies 79–224; it reads FLLLLLRLLA…WRLVDICFIQ (146 aa). The Lumenal segment spans residues 84-232; that stretch reads LRLLARQPWK…IQLNYSFPSA (149 aa). An N6-acetyllysine modification is found at Lys-109.

Belongs to the NAT8 family. In terms of processing, acetylation on Lys-109 modulates enzymatic activity. In terms of tissue distribution, expressed in brain (at protein level).

The protein resides in the endoplasmic reticulum-Golgi intermediate compartment membrane. It is found in the endoplasmic reticulum membrane. It carries out the reaction L-lysyl-[protein] + acetyl-CoA = N(6)-acetyl-L-lysyl-[protein] + CoA + H(+). In terms of biological role, endoplasmic reticulum (ER)-membrane-bound lysine N-acetyltransferase catalyzing the N6-acetylation of lysine residues in the lumen of the ER in various proteins, including PROM1 and BACE1, using acetyl-CoA as acetyl donor. Thereby, may regulate apoptosis through the acetylation and the regulation of the expression of PROM1. Acetylates and stabilizes BACE1 immature protein, leading to increased steady-state levels in neurons. By acting on BACE1 expression, may regulate amyloid beta-peptide formation. N(6)-lysine acetylation in ER maintains protein homeostasis and regulates reticulophagy. This chain is N-acetyltransferase 8B, found in Mus musculus (Mouse).